Reading from the N-terminus, the 113-residue chain is MSEFDNAIPTAFDPFAEANAEDSGAGTKDYVHVRVQQRNGRKSLTTVQGLKKDYSYNKILKDLKKEFCCNGTVVQDPELGQVIQLQGDQRKNVSSFLVQAGIVKKENIKIHGF.

This sequence belongs to the SUI1 family.

Its function is as follows. Probably involved in translation. The protein is Protein translation factor SUI1 homolog of Salix bakko (Japanese willow).